The chain runs to 102 residues: Large ribosomal subunit protein bL21 (102 aa).

The protein belongs to the bacterial ribosomal protein bL21 family. As to quaternary structure, part of the 50S ribosomal subunit. Contacts protein L20.

Functionally, this protein binds to 23S rRNA in the presence of protein L20. The sequence is that of Large ribosomal subunit protein bL21 from Agathobacter rectalis (strain ATCC 33656 / DSM 3377 / JCM 17463 / KCTC 5835 / VPI 0990) (Eubacterium rectale).